A 1053-amino-acid chain; its full sequence is Mediator of RNA polymerase II transcription subunit 16 (1053 aa).

The interval 139-170 is disordered; that stretch reads KTEGNTEKNKDTKQIGNGSGTNGHGDSPINTP. A compositionally biased stretch (basic and acidic residues) spans 142–151; that stretch reads GNTEKNKDTK.

Belongs to the Mediator complex subunit 16 family. In terms of assembly, component of the Mediator complex.

The protein resides in the nucleus. Its function is as follows. Component of the Mediator complex, a coactivator involved in the regulated transcription of nearly all RNA polymerase II-dependent genes. Mediator functions as a bridge to convey information from gene-specific regulatory proteins to the basal RNA polymerase II transcription machinery. Mediator is recruited to promoters by direct interactions with regulatory proteins and serves as a scaffold for the assembly of a functional preinitiation complex with RNA polymerase II and the general transcription factors. In Candida albicans (strain SC5314 / ATCC MYA-2876) (Yeast), this protein is Mediator of RNA polymerase II transcription subunit 16 (SIN4).